The chain runs to 165 residues: C-phycoerythrin class 2 subunit alpha (165 aa).

Residue Cys-75 participates in phycourobilin binding. Residues Cys-83 and Cys-140 each coordinate (2R,3E)-phycoerythrobilin.

It belongs to the phycobiliprotein family. As to quaternary structure, heterodimer of an alpha and a beta chain. Contains two covalently linked phycoerythrobilin chromophores and one covalently linked phycourobilin chromophore.

It is found in the cellular thylakoid membrane. Its function is as follows. Light-harvesting photosynthetic bile pigment-protein from the phycobiliprotein complex. This chain is C-phycoerythrin class 2 subunit alpha (mpeA), found in Synechococcus sp. (strain WH8020).